A 209-amino-acid chain; its full sequence is Large ribosomal subunit protein uL3 (209 aa).

The tract at residues 133-153 is disordered; it reads THGNSLSHRVPGSIGQNQTPG. N5-methylglutamine is present on glutamine 150.

This sequence belongs to the universal ribosomal protein uL3 family. In terms of assembly, part of the 50S ribosomal subunit. Forms a cluster with proteins L14 and L19. In terms of processing, methylated by PrmB.

Its function is as follows. One of the primary rRNA binding proteins, it binds directly near the 3'-end of the 23S rRNA, where it nucleates assembly of the 50S subunit. The sequence is that of Large ribosomal subunit protein uL3 from Serratia proteamaculans (strain 568).